The chain runs to 504 residues: Cytochrome P450 6B2 (504 aa).

C445 is a binding site for heme.

It belongs to the cytochrome P450 family. Requires heme as cofactor.

It localises to the endoplasmic reticulum membrane. The protein resides in the microsome membrane. It catalyses the reaction an organic molecule + reduced [NADPH--hemoprotein reductase] + O2 = an alcohol + oxidized [NADPH--hemoprotein reductase] + H2O + H(+). This chain is Cytochrome P450 6B2 (CYP6B2), found in Helicoverpa armigera (Cotton bollworm).